The chain runs to 478 residues: Deoxyribodipyrimidine photo-lyase (478 aa).

The Photolyase/cryptochrome alpha/beta domain occupies 2–136; that stretch reads NVNLMWFRND…IINCFHDSVL (135 aa). Glu-110 serves as a coordination point for (6R)-5,10-methylene-5,6,7,8-tetrahydrofolate. FAD is bound by residues Tyr-227 and 239-243; that span reads TSMLS. 2 interaction with DNA regions span residues 279–286 and 346–347; these read ELLWREFY and NR. 377 to 379 contributes to the FAD binding site; sequence DGD. Gln-409 is a binding site for DNA.

This sequence belongs to the DNA photolyase class-1 family. As to quaternary structure, monomer. FAD is required as a cofactor. (6R)-5,10-methylene-5,6,7,8-tetrahydrofolate serves as cofactor.

It carries out the reaction cyclobutadipyrimidine (in DNA) = 2 pyrimidine residues (in DNA).. Its function is as follows. Involved in repair of UV radiation-induced DNA damage. Catalyzes the light-dependent monomerization (300-600 nm) of cyclobutyl pyrimidine dimers (in cis-syn configuration), which are formed between adjacent bases on the same DNA strand upon exposure to ultraviolet radiation. The polypeptide is Deoxyribodipyrimidine photo-lyase (phrB) (Buchnera aphidicola subsp. Baizongia pistaciae (strain Bp)).